Reading from the N-terminus, the 497-residue chain is Lysine--tRNA ligase (497 aa).

Mg(2+) is bound by residues Glu-406 and Glu-413.

The protein belongs to the class-II aminoacyl-tRNA synthetase family. As to quaternary structure, homodimer. Requires Mg(2+) as cofactor.

Its subcellular location is the cytoplasm. It catalyses the reaction tRNA(Lys) + L-lysine + ATP = L-lysyl-tRNA(Lys) + AMP + diphosphate. The polypeptide is Lysine--tRNA ligase (Rhizobium leguminosarum bv. trifolii (strain WSM2304)).